The following is a 783-amino-acid chain: Endonuclease MutS2 (783 aa).

328–335 (GPNTGGKT) provides a ligand contact to ATP. Residues 708–783 (LDLRGKRYEE…GSGCTIATLG (76 aa)) form the Smr domain.

Belongs to the DNA mismatch repair MutS family. MutS2 subfamily. In terms of assembly, homodimer. Binds to stalled ribosomes, contacting rRNA.

In terms of biological role, endonuclease that is involved in the suppression of homologous recombination and thus may have a key role in the control of bacterial genetic diversity. Its function is as follows. Acts as a ribosome collision sensor, splitting the ribosome into its 2 subunits. Detects stalled/collided 70S ribosomes which it binds and splits by an ATP-hydrolysis driven conformational change. Acts upstream of the ribosome quality control system (RQC), a ribosome-associated complex that mediates the extraction of incompletely synthesized nascent chains from stalled ribosomes and their subsequent degradation. Probably generates substrates for RQC. The sequence is that of Endonuclease MutS2 from Streptococcus thermophilus (strain ATCC BAA-491 / LMD-9).